A 229-amino-acid polypeptide reads, in one-letter code: Ras-related protein Rab-33B (229 aa).

Residues Asn43, Val44, Gly45, Lys46, Thr47, Cys48, Thr62, and Thr65 each contribute to the GTP site. Residue Thr47 coordinates Mg(2+). Residues 56-68 (GRFPDRTEATIGV) carry the Switch 1 motif. Mg(2+) is bound by residues Thr65 and Asp88. The Switch 2 signature appears at 89–108 (TAGQERFRKSMVQHYYRNVH). GTP contacts are provided by Gly91, Asn148, Lys149, Asp151, Ala179, and Lys180. S-geranylgeranyl cysteine attachment occurs at residues Cys227 and Cys229. Position 229 is a cysteine methyl ester (Cys229).

The protein belongs to the small GTPase superfamily. Rab family. Interacts (GTP- and GDP-bound forms) with ATG16L1; the complex consists of a tetramer where two RAB33B molecules bind independently one molecule of the ATG16L1 homodimer; the interaction promotes ATG12-ATG5-ATG16L1 complex recruitment to phagophores. Interacts with ATG16L2; however interaction is approximately hundred times lower than for ATG16L1. Interacts with RIC1 (via C-terminus domain); the interaction is direct with a preference for RAB33B-GTP. Interacts with RGP1. The cofactor is Mg(2+). In terms of processing, prenylated.

It is found in the golgi apparatus membrane. It localises to the golgi apparatus. Its subcellular location is the cis-Golgi network. The protein resides in the preautophagosomal structure membrane. It carries out the reaction GTP + H2O = GDP + phosphate + H(+). With respect to regulation, regulated by guanine nucleotide exchange factors (GEFs) which promote the exchange of bound GDP for free GTP. Regulated by GTPase activating proteins (GAPs) such as SGSM2 which increase the GTP hydrolysis activity. Inhibited by GDP dissociation inhibitors (GDIs). Functionally, the small GTPases Rab are key regulators of intracellular membrane trafficking, from the formation of transport vesicles to their fusion with membranes. Rabs cycle between an inactive GDP-bound form and an active GTP-bound form that is able to recruit to membranes different sets of downstream effectors directly responsible for vesicle formation, movement, tethering and fusion. RAB33B acts, in coordination with RAB6A, to regulate intra-Golgi retrograde trafficking. Participates in autophagosome formation by recruiting the ATG12-ATG5-ATG16L1 complex to phagophores, probably in a nucleotide-independent manner. The chain is Ras-related protein Rab-33B (RAB33B) from Pongo abelii (Sumatran orangutan).